The following is a 176-amino-acid chain: ATP-dependent protease subunit HslV (176 aa).

Thr2 is an active-site residue. Positions 157, 160, and 163 each coordinate Na(+).

It belongs to the peptidase T1B family. HslV subfamily. A double ring-shaped homohexamer of HslV is capped on each side by a ring-shaped HslU homohexamer. The assembly of the HslU/HslV complex is dependent on binding of ATP.

It localises to the cytoplasm. It carries out the reaction ATP-dependent cleavage of peptide bonds with broad specificity.. Its activity is regulated as follows. Allosterically activated by HslU binding. Functionally, protease subunit of a proteasome-like degradation complex believed to be a general protein degrading machinery. The chain is ATP-dependent protease subunit HslV from Salmonella gallinarum (strain 287/91 / NCTC 13346).